The following is a 155-amino-acid chain: Phytohormone-binding protein CSBP (155 aa).

Residues Leu-22, Gln-67, Glu-69, and 139–142 each bind trans-zeatin; that span reads TLMY. Residue Gln-67 coordinates gibberellin A3. Thr-139 serves as a coordination point for gibberellin A3.

The protein belongs to the BetVI family. In terms of assembly, monomer.

Functionally, binds the cytokinin trans-zeatin in vitro. Binds gibberellin A3 (GA3) in vitro. This is Phytohormone-binding protein CSBP from Vigna radiata var. radiata (Mung bean).